The sequence spans 498 residues: Elastase (498 aa).

A signal peptide spans 1-23 (MKKVSTLDLLFVAIMGVSPAAFA). A propeptide spanning residues 24-197 (ADLIDVSKLP…VLDQWEGLAH (174 aa)) is cleaved from the precursor. Cys-227 and Cys-255 are joined by a disulfide. Thr-236 carries the phosphothreonine modification. Asp-333 serves as a coordination point for Ca(2+). Residue His-337 participates in Zn(2+) binding. Residue Glu-338 is part of the active site. Zn(2+) contacts are provided by His-341 and Glu-361. Glu-369, Glu-372, Asp-380, and Leu-382 together coordinate Ca(2+). The Proton donor role is filled by His-420. A disulfide bridge links Cys-467 with Cys-494.

Belongs to the peptidase M4 family. The cofactor is Ca(2+). It depends on Zn(2+) as a cofactor. Made as a pre-pro-protein which is exported to the periplasm. Probably autocatalyzes cleavage of its pro-peptide. The pro-peptide can be secreted with mature elastase.

It localises to the secreted. The catalysed reaction is Hydrolysis of proteins including elastin, collagen types III and IV, fibronectin and immunoglobulin A, generally with bulky hydrophobic group at P1'. Insulin B chain cleavage pattern identical to that of thermolysin, but specificity differs in other respects.. In terms of biological role, cleaves host elastase, collagen, IgI and several complement components as well as endogenous pro-aminopeptidase, pro-chitin-binding protein (cbpD). Cleaves its own pro-peptide. Involved in the pathogenesis of P.aeruginosa infections. This chain is Elastase (lasB), found in Pseudomonas aeruginosa (strain UCBPP-PA14).